The sequence spans 209 residues: Chaperone protein TorD (209 aa).

The protein belongs to the TorD/DmsD family. TorD subfamily.

It localises to the cytoplasm. Functionally, involved in the biogenesis of TorA. Acts on TorA before the insertion of the molybdenum cofactor and, as a result, probably favors a conformation of the apoenzyme that is competent for acquiring the cofactor. The protein is Chaperone protein TorD of Shewanella sp. (strain MR-4).